A 1093-amino-acid polypeptide reads, in one-letter code: Isoleucine--tRNA ligase, chloroplastic/mitochondrial (1093 aa).

Positions 69–103 (PNNEFGHSSKRRSRGPVMAAKKASEGEKQEDGKYK) are disordered. A compositionally biased stretch (basic and acidic residues) spans 90 to 103 (KASEGEKQEDGKYK). Positions 155–165 (PYANGDLHMGH) match the 'HIGH' region motif. An L-isoleucyl-5'-AMP-binding site is contributed by E682. Positions 723–727 (KMSKS) match the 'KMSKS' region motif. K726 contacts ATP. Residues C1050, C1053, C1070, and C1073 each contribute to the Zn(2+) site.

Belongs to the class-I aminoacyl-tRNA synthetase family.

It is found in the plastid. The protein resides in the chloroplast. Its subcellular location is the mitochondrion. The catalysed reaction is tRNA(Ile) + L-isoleucine + ATP = L-isoleucyl-tRNA(Ile) + AMP + diphosphate. The chain is Isoleucine--tRNA ligase, chloroplastic/mitochondrial from Arabidopsis thaliana (Mouse-ear cress).